A 101-amino-acid chain; its full sequence is Small ribosomal subunit protein uS14 (101 aa).

The segment at serine 33–arginine 69 is disordered. Residues leucine 51–glycine 68 show a composition bias toward basic and acidic residues.

This sequence belongs to the universal ribosomal protein uS14 family. As to quaternary structure, part of the 30S ribosomal subunit. Contacts proteins S3 and S10.

Its function is as follows. Binds 16S rRNA, required for the assembly of 30S particles and may also be responsible for determining the conformation of the 16S rRNA at the A site. This is Small ribosomal subunit protein uS14 from Xanthomonas axonopodis pv. citri (strain 306).